Consider the following 156-residue polypeptide: Large ribosomal subunit protein bL9 (156 aa).

The protein belongs to the bacterial ribosomal protein bL9 family.

Functionally, binds to the 23S rRNA. The polypeptide is Large ribosomal subunit protein bL9 (Treponema pallidum (strain Nichols)).